We begin with the raw amino-acid sequence, 211 residues long: MANNLEQILREKLEILLQSTALSLSSQQKQQLVKLVLLLNKWNKAYNLTSVRDPQEMLVKHILDSLVVSPYLRGERFIDVGTGPGLPGLPLAIINPDKKFVLLDSLGKRMSFIRNAVRELELTNVEPVLSRVEEYIPDHKFDGVLSRAFASLKDMTDWCSHLPVNNGLFYALKGQYNEDEIKQLDEKFTIQQVIKLDVPELQGKRHLILIK.

Residues Gly-81, Leu-86, Val-132–Glu-133, and Arg-147 each bind S-adenosyl-L-methionine.

It belongs to the methyltransferase superfamily. RNA methyltransferase RsmG family.

The protein resides in the cytoplasm. It catalyses the reaction guanosine(527) in 16S rRNA + S-adenosyl-L-methionine = N(7)-methylguanosine(527) in 16S rRNA + S-adenosyl-L-homocysteine. In terms of biological role, specifically methylates the N7 position of guanine in position 527 of 16S rRNA. This chain is Ribosomal RNA small subunit methyltransferase G, found in Actinobacillus succinogenes (strain ATCC 55618 / DSM 22257 / CCUG 43843 / 130Z).